Reading from the N-terminus, the 121-residue chain is MSKPRQSTLDPEDKKYLEIPDSEVVLPAAVDSYLRQKLKDQSLKECSSHVAAFADCSKDKYISVVWECRELQQLMKNCLVEYTTSERLIGMKREWVDASKKRIYEKRLQKELESKEPTPKK.

The CHCH domain maps to 43–86 (LKECSSHVAAFADCSKDKYISVVWECRELQQLMKNCLVEYTTSE). 2 short sequence motifs (cx9C motif) span residues 46–56 (CSSHVAAFADC) and 68–78 (CRELQQLMKNC). 2 disulfides stabilise this stretch: Cys-46–Cys-78 and Cys-56–Cys-68.

The protein belongs to the CMC family.

This is an uncharacterized protein from Dictyostelium discoideum (Social amoeba).